The primary structure comprises 309 residues: Carbamate kinase 3 (309 aa).

Belongs to the carbamate kinase family.

The protein localises to the cytoplasm. It carries out the reaction hydrogencarbonate + NH4(+) + ATP = carbamoyl phosphate + ADP + H2O + H(+). Its pathway is metabolic intermediate metabolism; carbamoyl phosphate degradation; CO(2) and NH(3) from carbamoyl phosphate: step 1/1. The polypeptide is Carbamate kinase 3 (arcC3) (Staphylococcus aureus (strain USA300)).